We begin with the raw amino-acid sequence, 486 residues long: Portal protein (486 aa).

Residues 456–486 form a disordered region; it reads MVDADPTVPGSPSPTAPPKPQPAIESSGGDA. The span at 464–476 shows a compositional bias: pro residues; it reads PGSPSPTAPPKPQ.

This sequence belongs to the SPP1-like portal protein family. As to quaternary structure, homododecamer.

The protein localises to the virion. Its function is as follows. Forms the portal vertex of the capsid. This portal plays critical roles in head assembly, genome packaging, neck/tail attachment, and genome ejection. The portal protein multimerizes as a single ring-shaped homododecamer arranged around a central channel. Binds to the terminase subunits to form the packaging machine. The chain is Portal protein (14) from Mycobacterium phage L5 (Mycobacteriophage L5).